The chain runs to 454 residues: MNLDDTIVAIATPPGRGGIGVVRLAGPEARTVALLMLRLANGKAELEAQRAHFAELVDPESGERLDEVVVAYFAKPHSYTTDDIVEISCHGSPVLLARVVELALAKGVRMADPGEFTMRAFLNGRIDLTQAEAVRDLIESQTLYQARVAAQQLGGSVSRRLQPTKQKLVNLIAVLEAGIDFADDDVSVLPAKEAIARIAEVHEPLAKLKEGFAFGKVVHEGLTLAIVGRPNVGKSSLFNRLVERDRAIVTAIPGTTRDLVTETVSLGGIPVHLVDTAGIRESHDEAESIGIQKSREAMADADLVLVVVDAHAETGHELDHQLISAAAERSAILVENKIDLGRHSVANGKSIPVVRTSAVSGEGIAELREQILRMVSGESGREESGFLTNIRQHQLVTDSLAALEAATNALEVRVPHEMVLMDLYNALRPLDDITGATTADDILNLIFSTFCIGK.

Residues Arg23, Glu86, and Arg125 each contribute to the (6S)-5-formyl-5,6,7,8-tetrahydrofolate site. The 156-residue stretch at 221–376 folds into the TrmE-type G domain; the sequence is GLTLAIVGRP…LREQILRMVS (156 aa). Position 231 (Asn231) interacts with K(+). Residues 231–236, 250–256, and 275–278 contribute to the GTP site; these read NVGKSS, TAIPGTT, and DTAG. Ser235 contributes to the Mg(2+) binding site. Positions 250, 252, and 255 each coordinate K(+). Thr256 provides a ligand contact to Mg(2+). Residue Lys454 coordinates (6S)-5-formyl-5,6,7,8-tetrahydrofolate.

It belongs to the TRAFAC class TrmE-Era-EngA-EngB-Septin-like GTPase superfamily. TrmE GTPase family. In terms of assembly, homodimer. Heterotetramer of two MnmE and two MnmG subunits. It depends on K(+) as a cofactor.

It localises to the cytoplasm. In terms of biological role, exhibits a very high intrinsic GTPase hydrolysis rate. Involved in the addition of a carboxymethylaminomethyl (cmnm) group at the wobble position (U34) of certain tRNAs, forming tRNA-cmnm(5)s(2)U34. In Koribacter versatilis (strain Ellin345), this protein is tRNA modification GTPase MnmE.